We begin with the raw amino-acid sequence, 120 residues long: Large ribosomal subunit protein bL20 (120 aa).

It belongs to the bacterial ribosomal protein bL20 family.

Binds directly to 23S ribosomal RNA and is necessary for the in vitro assembly process of the 50S ribosomal subunit. It is not involved in the protein synthesizing functions of that subunit. The sequence is that of Large ribosomal subunit protein bL20 from Methylacidiphilum infernorum (isolate V4) (Methylokorus infernorum (strain V4)).